The primary structure comprises 55 residues: Large ribosomal subunit protein bL33A (55 aa).

Belongs to the bacterial ribosomal protein bL33 family.

In Mycobacterium sp. (strain KMS), this protein is Large ribosomal subunit protein bL33A.